Consider the following 55-residue polypeptide: Large ribosomal subunit protein bL32 (55 aa).

Positions 1–27 (MAVQQNKPTRSKRGMRRSHDALTTATL) are disordered.

Belongs to the bacterial ribosomal protein bL32 family.

The chain is Large ribosomal subunit protein bL32 from Yersinia enterocolitica serotype O:8 / biotype 1B (strain NCTC 13174 / 8081).